Reading from the N-terminus, the 485-residue chain is Glutamate--tRNA ligase (485 aa).

The short motif at 11-21 is the 'HIGH' region element; sequence PSPTGHLHIGN. The short motif at 252 to 256 is the 'KMSKS' region element; the sequence is KLSKR. An ATP-binding site is contributed by Lys255.

Belongs to the class-I aminoacyl-tRNA synthetase family. Glutamate--tRNA ligase type 1 subfamily. As to quaternary structure, monomer.

The protein localises to the cytoplasm. It catalyses the reaction tRNA(Glu) + L-glutamate + ATP = L-glutamyl-tRNA(Glu) + AMP + diphosphate. In terms of biological role, catalyzes the attachment of glutamate to tRNA(Glu) in a two-step reaction: glutamate is first activated by ATP to form Glu-AMP and then transferred to the acceptor end of tRNA(Glu). The protein is Glutamate--tRNA ligase of Bacillus licheniformis (strain ATCC 14580 / DSM 13 / JCM 2505 / CCUG 7422 / NBRC 12200 / NCIMB 9375 / NCTC 10341 / NRRL NRS-1264 / Gibson 46).